Consider the following 466-residue polypeptide: Chromosomal replication initiator protein DnaA (466 aa).

The tract at residues 1 to 86 (MSLSLWQQCL…EVGTKPVTQT (86 aa)) is domain I, interacts with DnaA modulators. A domain II region spans residues 86–129 (TLKTPVHNVVAPAQTTTAQPQRVAPAARSGWDNVPAPAEPTYRS). The interval 130 to 346 (NVNVKHTFDN…GALNRVIANA (217 aa)) is domain III, AAA+ region. 4 residues coordinate ATP: Gly-174, Gly-176, Lys-177, and Thr-178. Residues 347–466 (NFTGRAITID…FSNLIRTLSS (120 aa)) form a domain IV, binds dsDNA region.

It belongs to the DnaA family. In terms of assembly, oligomerizes as a right-handed, spiral filament on DNA at oriC.

It localises to the cytoplasm. Plays an essential role in the initiation and regulation of chromosomal replication. ATP-DnaA binds to the origin of replication (oriC) to initiate formation of the DNA replication initiation complex once per cell cycle. Binds the DnaA box (a 9 base pair repeat at the origin) and separates the double-stranded (ds)DNA. Forms a right-handed helical filament on oriC DNA; dsDNA binds to the exterior of the filament while single-stranded (ss)DNA is stabiized in the filament's interior. The ATP-DnaA-oriC complex binds and stabilizes one strand of the AT-rich DNA unwinding element (DUE), permitting loading of DNA polymerase. After initiation quickly degrades to an ADP-DnaA complex that is not apt for DNA replication. Binds acidic phospholipids. In Salmonella agona (strain SL483), this protein is Chromosomal replication initiator protein DnaA.